Reading from the N-terminus, the 343-residue chain is L-ornithine/L-arginine 3-hydroxylase (343 aa).

The Fe cation site is built by His147 and Glu149. The segment covering 199–215 has biased composition (polar residues); it reads MPDNSHLPQNTAESTGD. The disordered stretch occupies residues 199 to 218; it reads MPDNSHLPQNTAESTGDPTK. Residue His302 coordinates Fe cation. 2-oxoglutarate is bound at residue Arg316.

Belongs to the clavaminate synthase family. Fe(2+) serves as cofactor.

It catalyses the reaction L-ornithine + 2-oxoglutarate + O2 = (3S)-3-hydroxy-L-ornithine + succinate + CO2. The catalysed reaction is L-arginine + 2-oxoglutarate + O2 = (2S,3S)-hydroxyarginine + succinate + CO2. Functionally, alpha-ketoglutarate-dependent dioxygenase that in vitro catalyzes the regio- and stereoselective hydroxylation of L-ornithine and L-arginine, leading to (3S)-3-hydroxy-L-ornithine and (3S)-3-hydroxy-L-arginine, respectively. Cannot use L-lysine, D-ornithine, or D-arginine as substrate. The sequence is that of L-ornithine/L-arginine 3-hydroxylase from Catenulispora acidiphila (strain DSM 44928 / JCM 14897 / NBRC 102108 / NRRL B-24433 / ID139908).